We begin with the raw amino-acid sequence, 84 residues long: Large ribosomal subunit protein bL27 (84 aa).

This sequence belongs to the bacterial ribosomal protein bL27 family.

The sequence is that of Large ribosomal subunit protein bL27 from Buchnera aphidicola subsp. Acyrthosiphon pisum (strain Tuc7).